The primary structure comprises 154 residues: Snaclec dabocetin subunit alpha (154 aa).

The signal sequence occupies residues 1–23 (MGRFISVSFGLLVVFLSLSGTGA). Intrachain disulfides connect Cys-25/Cys-36, Cys-53/Cys-148, and Cys-123/Cys-140. Residues 32–149 (HEGHCYKVFK…CGDKNPFICK (118 aa)) form the C-type lectin domain.

This sequence belongs to the snaclec family. As to quaternary structure, heterodimer of subunits alpha and beta; disulfide-linked. Expressed by the venom gland.

The protein localises to the secreted. Its function is as follows. Inhibits ristocetin-induced platelet aggregation via binding to platelet glycoprotein Ibalpha (GP1BA). The polypeptide is Snaclec dabocetin subunit alpha (Daboia siamensis (Eastern Russel's viper)).